The chain runs to 462 residues: Probable serine/threonine-protein kinase DDB_G0286841 (462 aa).

The Protein kinase domain maps to 64–358 (FNFLKVISKG…VDEVKCHPFF (295 aa)). ATP-binding positions include 70 to 78 (ISKGGFGKV) and lysine 93. Aspartate 188 serves as the catalytic Proton acceptor. The region spanning 359-462 (SEINWKIYED…LFIDFDFPTY (104 aa)) is the AGC-kinase C-terminal domain. The span at 414–439 (NIYKNNNNNNNNNNNNNNNNNNNNNN) shows a compositional bias: low complexity. Positions 414–447 (NIYKNNNNNNNNNNNNNNNNNNNNNNDDNDDENN) are disordered.

It belongs to the protein kinase superfamily. AGC Ser/Thr protein kinase family.

It catalyses the reaction L-seryl-[protein] + ATP = O-phospho-L-seryl-[protein] + ADP + H(+). The enzyme catalyses L-threonyl-[protein] + ATP = O-phospho-L-threonyl-[protein] + ADP + H(+). The protein is Probable serine/threonine-protein kinase DDB_G0286841 of Dictyostelium discoideum (Social amoeba).